Reading from the N-terminus, the 336-residue chain is tRNA(Ile)-lysidine synthase (336 aa).

40-45 lines the ATP pocket; sequence SGGQDS.

It belongs to the tRNA(Ile)-lysidine synthase family.

The protein localises to the cytoplasm. It catalyses the reaction cytidine(34) in tRNA(Ile2) + L-lysine + ATP = lysidine(34) in tRNA(Ile2) + AMP + diphosphate + H(+). Functionally, ligates lysine onto the cytidine present at position 34 of the AUA codon-specific tRNA(Ile) that contains the anticodon CAU, in an ATP-dependent manner. Cytidine is converted to lysidine, thus changing the amino acid specificity of the tRNA from methionine to isoleucine. The chain is tRNA(Ile)-lysidine synthase from Prochlorococcus marinus (strain SARG / CCMP1375 / SS120).